Here is a 356-residue protein sequence, read N- to C-terminus: Uroporphyrinogen decarboxylase (356 aa).

Substrate contacts are provided by residues 27–31, D77, Y154, T209, and H327; that span reads RQAGR.

Belongs to the uroporphyrinogen decarboxylase family. As to quaternary structure, homodimer.

The protein localises to the cytoplasm. The enzyme catalyses uroporphyrinogen III + 4 H(+) = coproporphyrinogen III + 4 CO2. Its pathway is porphyrin-containing compound metabolism; protoporphyrin-IX biosynthesis; coproporphyrinogen-III from 5-aminolevulinate: step 4/4. Catalyzes the decarboxylation of four acetate groups of uroporphyrinogen-III to yield coproporphyrinogen-III. The sequence is that of Uroporphyrinogen decarboxylase from Hamiltonella defensa subsp. Acyrthosiphon pisum (strain 5AT).